Consider the following 439-residue polypeptide: Agmatine coumaroyltransferase-1 (439 aa).

Catalysis depends on proton acceptor residues His-152 and Asp-385.

Belongs to the plant acyltransferase family. As to quaternary structure, monomer.

It carries out the reaction 4-coumaroyl-CoA + agmatine = N-(4-guanidinobutyl)-4-hydroxycinnamamide + CoA + H(+). Inhibited by DEPC. Completely inhibited by ZnSO(4), strongly inhibited by CuSO(4), partially inhibited by MnCl(2). Unaffected by MgCl(2) or CaCl(2). Involved in the synthesis of hordatines (antifungal hydroxycinnamoylagmatine derivatives). Specific for agmatine as the acyl acceptor, inactive towards tyramine and putrescine. Has activity with the acyl donors 4-coumaroyl-CoA, cinnamoyl-CoA, caffeoyl-CoA, feruloyl-CoA, and to a lesser extent sinapoyl-CoA. The chain is Agmatine coumaroyltransferase-1 (ACT-1) from Hordeum vulgare (Barley).